The primary structure comprises 111 residues: MGVRKIKEKPNVCKKGDKVRVIAGKDKGTEAVVLTALPKVNKVIVEGVNIVKKHQRPTNELPQGGIVEKEAAIHVSNVQVLDKNGVAGRVGYKFVDGKKVRYNKKSGEVLD.

The protein belongs to the universal ribosomal protein uL24 family. In terms of assembly, part of the 50S ribosomal subunit.

In terms of biological role, one of two assembly initiator proteins, it binds directly to the 5'-end of the 23S rRNA, where it nucleates assembly of the 50S subunit. Its function is as follows. One of the proteins that surrounds the polypeptide exit tunnel on the outside of the subunit. This is Large ribosomal subunit protein uL24 from Streptococcus pneumoniae (strain Hungary19A-6).